The sequence spans 639 residues: UvrABC system protein C (639 aa).

Residues 20–97 enclose the GIY-YIG domain; it reads ERSGVYRMFD…IKKFQPKFNI (78 aa). The UVR domain occupies 207-242; that stretch reads KELQENLSRKMEELSSQMRFEEAAEIRDRIKALSYV.

This sequence belongs to the UvrC family. Interacts with UvrB in an incision complex.

Its subcellular location is the cytoplasm. In terms of biological role, the UvrABC repair system catalyzes the recognition and processing of DNA lesions. UvrC both incises the 5' and 3' sides of the lesion. The N-terminal half is responsible for the 3' incision and the C-terminal half is responsible for the 5' incision. This Rickettsia africae (strain ESF-5) protein is UvrABC system protein C.